Consider the following 390-residue polypeptide: uncharacterized protein (390 aa).

This is an uncharacterized protein from Acanthamoeba polyphaga (Amoeba).